The sequence spans 523 residues: Probable 3-ketoacyl-CoA synthase 20 (523 aa).

2 helical membrane passes run 31–55 and 78–96; these read IVAV…AAGG and ALAV…YAAS. The FAE domain maps to 93-382; it reads YAASRPRPVY…RFLATVVLKR (290 aa). Catalysis depends on residues cysteine 237, histidine 317, histidine 401, histidine 405, and asparagine 438.

The protein belongs to the thiolase-like superfamily. Chalcone/stilbene synthases family. As to expression, highly expressed in leaf sheaths. Expressed in leaves, flag leaves and panicles.

It is found in the membrane. It catalyses the reaction a very-long-chain acyl-CoA + malonyl-CoA + H(+) = a very-long-chain 3-oxoacyl-CoA + CO2 + CoA. In terms of biological role, contributes to fatty acids elongation. Plays a role in controlling leaf anatomy and plant architecture. The sequence is that of Probable 3-ketoacyl-CoA synthase 20 from Oryza sativa subsp. japonica (Rice).